A 359-amino-acid polypeptide reads, in one-letter code: S-adenosylmethionine-dependent nucleotide dehydratase RSAD2 (359 aa).

The segment at Q43–F67 is disordered. Basic and acidic residues predominate over residues S50–S63. Residues F67–L287 enclose the Radical SAM core domain. The [4Fe-4S] cluster site is built by C81, C85, and C88.

This sequence belongs to the radical SAM superfamily. RSAD2 family. [4Fe-4S] cluster is required as a cofactor.

The protein localises to the endoplasmic reticulum membrane. Its function is as follows. Interferon-inducible iron-sulfur (4FE-4S) cluster-binding antiviral protein which plays a major role in the cell antiviral state induced by type I and type II interferon. This is S-adenosylmethionine-dependent nucleotide dehydratase RSAD2 from Danio rerio (Zebrafish).